Consider the following 226-residue polypeptide: Urease accessory protein UreF (226 aa).

Belongs to the UreF family. In terms of assembly, ureD, UreF and UreG form a complex that acts as a GTP-hydrolysis-dependent molecular chaperone, activating the urease apoprotein by helping to assemble the nickel containing metallocenter of UreC. The UreE protein probably delivers the nickel.

It is found in the cytoplasm. Its function is as follows. Required for maturation of urease via the functional incorporation of the urease nickel metallocenter. The sequence is that of Urease accessory protein UreF from Paraburkholderia phymatum (strain DSM 17167 / CIP 108236 / LMG 21445 / STM815) (Burkholderia phymatum).